Consider the following 578-residue polypeptide: Glutathione hydrolase 2 (578 aa).

The first 26 residues, 1–26 (MNSFMSLVRTATIALLLIAFLQNANA), serve as a signal peptide directing secretion. Asn-94 carries N-linked (GlcNAc...) asparagine glycosylation. Arg-103 is an L-glutamate binding site. N-linked (GlcNAc...) asparagine glycosylation is found at Asn-176 and Asn-227. The Nucleophile role is filled by Thr-374. L-glutamate is bound by residues Thr-392, Asn-394, Glu-413, Asp-416, 446 to 447 (SS), and 467 to 468 (GG). Asn-511 carries an N-linked (GlcNAc...) asparagine glycan.

It belongs to the gamma-glutamyltransferase family. As to expression, expressed in roots, immature trichomes and pollen. In developing siliques, specifically expressed in the embryo, endosperm, outer integument and a small portion of the funiculus.

Its subcellular location is the secreted. It is found in the extracellular space. The protein localises to the apoplast. It carries out the reaction an N-terminal (5-L-glutamyl)-[peptide] + an alpha-amino acid = 5-L-glutamyl amino acid + an N-terminal L-alpha-aminoacyl-[peptide]. The enzyme catalyses glutathione + H2O = L-cysteinylglycine + L-glutamate. The catalysed reaction is an S-substituted glutathione + H2O = an S-substituted L-cysteinylglycine + L-glutamate. Its pathway is sulfur metabolism; glutathione metabolism. May be required for glutathione transport into developing seeds. In Arabidopsis thaliana (Mouse-ear cress), this protein is Glutathione hydrolase 2 (GGT2).